Reading from the N-terminus, the 513-residue chain is MATSSSAWLMFSDHYPEILIAIACFLIFSLLLSARSSSEDSLPYNWPIFGMLPAIISNNQFNDFTTARLRKMGWTFIFKGPWLLDMDYIFTCDPSNINHMFNDNFENYPKGELGKVFDIFGNNIFNADGDLWHDHRKMAQTILWDGNYRTMQATFIRNKMDNALIPILDSAASKRKPVDLQDVFFRFTFDTSCFSVLAADPESLTMEFPAVPFSKAADQALDAALTRHITPRLIWKLKRFFNVGSERTLAVAWKVIDSYIYDKIAELKAKRKLVGKINSYDAVSFYMDNFNIHDDKFLRDNAFTYLLAQRNTQSLTMTWLFYALFENPKVELKILSELKSIVDESSERKFNDGFALFDSNMIQSAIYLHATLCEALRIYPPVPFEIKDAHKADVLPSGHKVRAGEKILFSPYAMARMKGIWGDDCLEFKPERWITGNGTLKHEPAYKFFAFSAGPRICLGKELSFTQMKMVVATIIYNFHLQMVKGHVVEQSNSILMDMKHGLMVQVRKRSVM.

The helical transmembrane segment at 14–34 threads the bilayer; the sequence is HYPEILIAIACFLIFSLLLSA. C458 contributes to the heme binding site.

This sequence belongs to the cytochrome P450 family. It depends on heme as a cofactor.

Its subcellular location is the membrane. The catalysed reaction is 4'-O-methylnorbelladine + reduced [NADPH--hemoprotein reductase] + O2 = (10bS,4aR)-noroxomaritidine + oxidized [NADPH--hemoprotein reductase] + 2 H2O + H(+). It carries out the reaction 4'-O-methylnorbelladine + reduced [NADPH--hemoprotein reductase] + O2 = (10bR,4aS)-noroxomaritidine + oxidized [NADPH--hemoprotein reductase] + 2 H2O + H(+). Its pathway is alkaloid biosynthesis. In terms of biological role, cytochrome P450 that catalyzes an intramolecular para-para' C-C phenol coupling of 4'-O-methylnorbelladine in alkaloids biosynthesis, including haemanthamine- and crinamine-type alkaloids, promising anticancer agents. Catalyzes the formation of (10bR,4aS)-noroxomaritidine and (10bS,4aR)-noroxomaritidine from 4'-O-methylnorbelladine. Also produces N-demethylnarwedine as a minor product. Involved in the biosynthesis of haemanthamine. Can also use 4'-O-methyl-N-methylnorbelladine, (S)- and (R)-coclaurine as substrates, but not 3'-O-methylnorbelladine, 3',4'-O-dimethylnorbelladine, norbelladine, haemanthamine, (10bS,4aR)- or (10bR,4aS)-noroxomaritidine, isovanillin or tyramine. This is Noroxomaritidine synthase from Narcissus aff. pseudonarcissus MK-2014 (Daffodil).